Consider the following 93-residue polypeptide: Small ribosomal subunit protein uS19 (93 aa).

It belongs to the universal ribosomal protein uS19 family.

In terms of biological role, protein S19 forms a complex with S13 that binds strongly to the 16S ribosomal RNA. The sequence is that of Small ribosomal subunit protein uS19 from Leuconostoc citreum (strain KM20).